A 404-amino-acid polypeptide reads, in one-letter code: Short chain dehydrogenase sirR (404 aa).

An N-terminal signal peptide occupies residues 1 to 28 (MHSKPQRALVIGATGVSGWSLCLQLLQT). 2 residues coordinate NADP(+): Ser-56 and Leu-58. N-linked (GlcNAc...) asparagine glycosylation is found at Asn-67 and Asn-157. Residue Ser-237 is the Proton donor of the active site. A glycan (N-linked (GlcNAc...) asparagine) is linked at Asn-274. Val-291 is a binding site for NADP(+).

This sequence belongs to the short-chain dehydrogenases/reductases (SDR) family. Highly divergent.

It functions in the pathway mycotoxin biosynthesis. In terms of biological role, short chain dehydrogenase; part of the gene cluster that mediates the biosynthesis of sirodesmin PL, an epipolythiodioxopiperazine (ETP) characterized by a disulfide bridged cyclic dipeptide and that acts as a phytotoxin which is involved in the blackleg didease of canola. SirD catalyzes the O-prenylation of L-tyrosine (L-Tyr) in the presence of dimethylallyl diphosphate (DMAPP) to yield 4-O-dimethylallyl-L-Tyr, and therefore represents probably the first pathway-specific enzyme in the biosynthesis of sirodesmin PL. 4-O-dimethylallyl-L-Tyr, then undergoes condensation with L-Ser in a reaction catalyzed by the non-ribosomal peptide synthase sirP to form the diketopiperazine (DKP) backbone. Further bishydroxylation of the DKP performed by the cytochrome P450 monooxygenase sirC leads to the production of the intermediate phomamide. This step is essential to form the reactive thiol group required for toxicity of sirodesmin PL. The next steps of sirodesmin biosynthesis are not well understood yet, but some predictions could be made from intermediate compounds identification. Phomamide is converted into phomalizarine via oxidation, probably by sirT. Further oxidation, methylation (by sirM or sirN) and reduction steps convert phomalizarine to deacetyl sirodesmin. Finally, acetyltransferase sirH probably acetylates deacetyl sirodesmin to produce sirodesmin PL. This chain is Short chain dehydrogenase sirR, found in Leptosphaeria maculans (Blackleg fungus).